A 353-amino-acid polypeptide reads, in one-letter code: 4-hydroxy-2-oxovalerate aldolase 2 (353 aa).

The Pyruvate carboxyltransferase domain maps to 14 to 266 (VRMTDTSLRD…KTGIDFFDIA (253 aa)). 22–23 (RD) serves as a coordination point for substrate. D23 is a Mn(2+) binding site. H26 acts as the Proton acceptor in catalysis. The substrate site is built by S176 and H205. Mn(2+)-binding residues include H205 and H207. Position 296 (Y296) interacts with substrate.

Belongs to the 4-hydroxy-2-oxovalerate aldolase family.

The catalysed reaction is (S)-4-hydroxy-2-oxopentanoate = acetaldehyde + pyruvate. This chain is 4-hydroxy-2-oxovalerate aldolase 2, found in Mycobacterium sp. (strain JLS).